A 357-amino-acid chain; its full sequence is MQKESIYGLTREQLVDWFLAHGEKKFRATQVWEWLYTKRVASFSEMSNISKSLMTLLEENFSLNPLKQVIVQEAQDGTVKYLFELPDKNMIETVLMRQEYGLSVCVTTQVGCNIGCTFCASGLLKKQRDLTAGEIVAQIMWVQHYFDERGLDERVSHVVVMGIGEPFDNYANVMNFLRTINDDKGLAIGARHITVSTSGLVPKIREFADSGLQVNLAISLHAPNNEVRTSIMRINRSFPIEKLMAAIDEYIEKTNRRVTFEYIMLSQVNDRPEHAQQLADLLRNKKKLSYVNLIPYNPVSEHDQYSRSSKEAVLKFYDVLKKNGINCVIRKEHGTDIDAACGQLRSKQMKKEKVKNQ.

Glutamate 92 functions as the Proton acceptor in the catalytic mechanism. Residues 98–330 (QEYGLSVCVT…KKNGINCVIR (233 aa)) form the Radical SAM core domain. Cysteines 105 and 341 form a disulfide. The [4Fe-4S] cluster site is built by cysteine 112, cysteine 116, and cysteine 119. S-adenosyl-L-methionine-binding positions include 164–165 (GE), serine 196, 219–221 (SLH), and asparagine 297. Cysteine 341 serves as the catalytic S-methylcysteine intermediate.

It belongs to the radical SAM superfamily. RlmN family. [4Fe-4S] cluster is required as a cofactor.

It localises to the cytoplasm. The enzyme catalyses adenosine(2503) in 23S rRNA + 2 reduced [2Fe-2S]-[ferredoxin] + 2 S-adenosyl-L-methionine = 2-methyladenosine(2503) in 23S rRNA + 5'-deoxyadenosine + L-methionine + 2 oxidized [2Fe-2S]-[ferredoxin] + S-adenosyl-L-homocysteine. The catalysed reaction is adenosine(37) in tRNA + 2 reduced [2Fe-2S]-[ferredoxin] + 2 S-adenosyl-L-methionine = 2-methyladenosine(37) in tRNA + 5'-deoxyadenosine + L-methionine + 2 oxidized [2Fe-2S]-[ferredoxin] + S-adenosyl-L-homocysteine. Specifically methylates position 2 of adenine 2503 in 23S rRNA and position 2 of adenine 37 in tRNAs. In Enterococcus faecalis (strain ATCC 700802 / V583), this protein is Probable dual-specificity RNA methyltransferase RlmN.